We begin with the raw amino-acid sequence, 730 residues long: Synaptogenesis protein syg-1 (730 aa).

The N-terminal stretch at 1 to 18 (MVRWQTWPLLLLFQLVTC) is a signal peptide. Residues 19–551 (QQLQQRIVEA…WIVITAKFDR (533 aa)) are Extracellular-facing. Ig-like domains are found at residues 23–123 (QRIV…AKLT), 131–265 (PKIV…VKLS), 270–352 (PQIN…IKLN), 357–433 (ARIM…QILS), and 441–540 (PPTV…RNIL). Cystine bridges form between cysteine 44–cysteine 104, cysteine 152–cysteine 246, cysteine 292–cysteine 336, cysteine 378–cysteine 420, and cysteine 462–cysteine 519. 2 N-linked (GlcNAc...) asparagine glycosylation sites follow: asparagine 93 and asparagine 206. A helical transmembrane segment spans residues 552 to 572 (MVALAIISAGVLLVSLLCCLC). Topologically, residues 573 to 730 (MCRSNCRSRK…RPISRTSTHV (158 aa)) are cytoplasmic.

This sequence belongs to the immunoglobulin superfamily. Interacts with skr-1. Interacts with syg-2. Interacts with the WAVE regulatory complex; the interaction leads to formation of a synaptic F-actin network that is required for synapse formation and axon branching. In terms of tissue distribution, expression in head motor neurons, occasionally in HSN neurons and weakly in other cells in the vulval region. Expressed in the primary synapse region of HSNL motor neuron.

The protein resides in the cell membrane. The protein localises to the cell projection. Its subcellular location is the axon. It is found in the synapse. Cell adhesion protein. Involved in synapse formation in the HSNL egg-laying motor neuron. Inhibits assembly of the SCF(sel-10) E3 ubiquitin ligase complex at synapses, and protects them from elimination. Also required for F-actin assembly at the synaptic region and for axon branch formation. The protein is Synaptogenesis protein syg-1 of Caenorhabditis elegans.